The primary structure comprises 332 residues: Glycerol-3-phosphate dehydrogenase [NAD(P)+] (332 aa).

Trp-13, Arg-33, and Lys-107 together coordinate NADPH. Sn-glycerol 3-phosphate contacts are provided by Lys-107, Gly-136, and Ser-138. Ala-140 is an NADPH binding site. Residues Lys-191, Asp-244, Ser-254, Arg-255, and Asn-256 each contribute to the sn-glycerol 3-phosphate site. Residue Lys-191 is the Proton acceptor of the active site. Arg-255 contacts NADPH. Residue Glu-280 coordinates NADPH.

The protein belongs to the NAD-dependent glycerol-3-phosphate dehydrogenase family.

It is found in the cytoplasm. It carries out the reaction sn-glycerol 3-phosphate + NAD(+) = dihydroxyacetone phosphate + NADH + H(+). It catalyses the reaction sn-glycerol 3-phosphate + NADP(+) = dihydroxyacetone phosphate + NADPH + H(+). It participates in membrane lipid metabolism; glycerophospholipid metabolism. Catalyzes the reduction of the glycolytic intermediate dihydroxyacetone phosphate (DHAP) to sn-glycerol 3-phosphate (G3P), the key precursor for phospholipid synthesis. This is Glycerol-3-phosphate dehydrogenase [NAD(P)+] from Alkalilimnicola ehrlichii (strain ATCC BAA-1101 / DSM 17681 / MLHE-1).